Consider the following 694-residue polypeptide: Glycine--tRNA ligase beta subunit (694 aa).

This sequence belongs to the class-II aminoacyl-tRNA synthetase family. Tetramer of two alpha and two beta subunits.

The protein resides in the cytoplasm. The catalysed reaction is tRNA(Gly) + glycine + ATP = glycyl-tRNA(Gly) + AMP + diphosphate. This is Glycine--tRNA ligase beta subunit from Lactiplantibacillus plantarum (strain ATCC BAA-793 / NCIMB 8826 / WCFS1) (Lactobacillus plantarum).